Reading from the N-terminus, the 258-residue chain is UPF0246 protein Sfri_2896 (258 aa).

This sequence belongs to the UPF0246 family.

The sequence is that of UPF0246 protein Sfri_2896 from Shewanella frigidimarina (strain NCIMB 400).